The following is a 124-amino-acid chain: Keratin-associated protein 12-2 (124 aa).

20 consecutive repeat copies span residues 10 to 13 (CQAA), 14 to 18 (CVPSS), 19 to 23 (CQPSC), 24 to 28 (STSSP), 33 to 38 (CFTSSL), 39 to 43 (CQPTC), 44 to 48 (STSST), 49 to 52 (CQAT), 53 to 57 (CVPVS), 58 to 62 (YRPAV), 63 to 67 (CLPVT), 68 to 72 (YKPTL), 73 to 77 (CVTPS), 78 to 82 (CQSSV), 83 to 87 (FLPVS), 88 to 92 (YRPAV), 98 to 102 (CQSSG), 103 to 107 (CYQPS), 108 to 112 (CPTLV), and 113 to 117 (YRPIS). The segment at 10–117 (CQAACVPSSC…CPTLVYRPIS (108 aa)) is 20 X 5 AA approximate repeats.

It belongs to the KRTAP type 12 family. In terms of assembly, interacts with hair keratins.

Its function is as follows. In the hair cortex, hair keratin intermediate filaments are embedded in an interfilamentous matrix, consisting of hair keratin-associated proteins (KRTAP), which are essential for the formation of a rigid and resistant hair shaft through their extensive disulfide bond cross-linking with abundant cysteine residues of hair keratins. The matrix proteins include the high-sulfur and high-glycine-tyrosine keratins. The sequence is that of Keratin-associated protein 12-2 from Bos taurus (Bovine).